The chain runs to 774 residues: Subtilisin-like protease SBT3.5 (774 aa).

A signal peptide spans 1-23 (MRNCRVLLVLVLSLVIVLNVVRA). Positions 24–108 (SDESKVHIVY…VMADSFYELA (85 aa)) are cleaved as a propeptide — removed in mature form. One can recognise an Inhibitor I9 domain in the interval 29–108 (VHIVYLGEKQ…VMADSFYELA (80 aa)). The Peptidase S8 domain occupies 112-621 (TWDYLGLSVA…GGIVNPEKAA (510 aa)). A glycan (N-linked (GlcNAc...) asparagine) is linked at asparagine 128. Aspartate 142 (charge relay system) is an active-site residue. N-linked (GlcNAc...) asparagine glycosylation occurs at asparagine 201. The active-site Charge relay system is the histidine 217. Residues asparagine 232, asparagine 394, asparagine 409, and asparagine 539 are each glycosylated (N-linked (GlcNAc...) asparagine). Residues 383–478 (SLVYPENAGF…ELGTDVLLYI (96 aa)) enclose the PA domain. Serine 552 acts as the Charge relay system in catalysis. N-linked (GlcNAc...) asparagine glycosylation is found at asparagine 644, asparagine 654, asparagine 725, and asparagine 755.

Belongs to the peptidase S8 family. In terms of tissue distribution, expressed in roots, leaves, stems, flower buds, developing siliques and mature seeds.

The protein localises to the secreted. The protein resides in the cell wall. In terms of biological role, serine protease that cleaves the pectin methylesterase 17 (PME17) protein to release the PME17 mature form in the apoplasm. This is Subtilisin-like protease SBT3.5 from Arabidopsis thaliana (Mouse-ear cress).